The following is a 369-amino-acid chain: Flagellar P-ring protein (369 aa).

An N-terminal signal peptide occupies residues 1-24 (MKTLHRCIGVALLALGALAGTAHA).

Belongs to the FlgI family. As to quaternary structure, the basal body constitutes a major portion of the flagellar organelle and consists of four rings (L,P,S, and M) mounted on a central rod.

Its subcellular location is the periplasm. The protein resides in the bacterial flagellum basal body. In terms of biological role, assembles around the rod to form the L-ring and probably protects the motor/basal body from shearing forces during rotation. The protein is Flagellar P-ring protein of Ralstonia nicotianae (strain ATCC BAA-1114 / GMI1000) (Ralstonia solanacearum).